Reading from the N-terminus, the 171-residue chain is Shikimate kinase (171 aa).

Residue 14–19 (GAGKST) participates in ATP binding. Position 18 (Ser-18) interacts with Mg(2+). Positions 36, 60, and 82 each coordinate substrate. Position 120 (Arg-120) interacts with ATP. Arg-139 contacts substrate. Residue Gln-156 participates in ATP binding.

The protein belongs to the shikimate kinase family. Monomer. Mg(2+) serves as cofactor.

The protein resides in the cytoplasm. It carries out the reaction shikimate + ATP = 3-phosphoshikimate + ADP + H(+). It functions in the pathway metabolic intermediate biosynthesis; chorismate biosynthesis; chorismate from D-erythrose 4-phosphate and phosphoenolpyruvate: step 5/7. Catalyzes the specific phosphorylation of the 3-hydroxyl group of shikimic acid using ATP as a cosubstrate. The sequence is that of Shikimate kinase from Shewanella frigidimarina (strain NCIMB 400).